Here is a 448-residue protein sequence, read N- to C-terminus: Zinc finger CCCH domain-containing protein 43 (448 aa).

The tract at residues 1 to 106 (MVNSEEIADG…GWSENESENV (106 aa)) is disordered. The segment covering 24 to 45 (SSHDRSLSDLNHAAEDLSDKLK) has biased composition (basic and acidic residues). Polar residues predominate over residues 63–79 (VSESNGGLDSNAVVTIN). The segment covering 80-89 (QEEEEEEEDR) has biased composition (acidic residues). 5 C3H1-type zinc fingers span residues 110–138 (RPGA…HPLA), 158–186 (KLGL…HTIP), 204–232 (RPGE…HPDP), 346–374 (RPDQ…HPKN), and 392–420 (RPDQ…HSVQ). Positions 424–448 (STESSQAIVEPPQVSANGNESDGWN) are disordered. A compositionally biased stretch (polar residues) spans 437 to 448 (VSANGNESDGWN).

It localises to the nucleus. The protein is Zinc finger CCCH domain-containing protein 43 of Arabidopsis thaliana (Mouse-ear cress).